We begin with the raw amino-acid sequence, 213 residues long: Thiamine-phosphate synthase (213 aa).

Residues 38-42 (QLRIK) and asparagine 70 contribute to the 4-amino-2-methyl-5-(diphosphooxymethyl)pyrimidine site. Mg(2+)-binding residues include aspartate 71 and aspartate 90. Serine 109 serves as a coordination point for 4-amino-2-methyl-5-(diphosphooxymethyl)pyrimidine. 2-[(2R,5Z)-2-carboxy-4-methylthiazol-5(2H)-ylidene]ethyl phosphate is bound at residue 135–137 (TQT). Residue lysine 138 participates in 4-amino-2-methyl-5-(diphosphooxymethyl)pyrimidine binding. 2-[(2R,5Z)-2-carboxy-4-methylthiazol-5(2H)-ylidene]ethyl phosphate contacts are provided by residues glycine 168 and 188 to 189 (VS).

It belongs to the thiamine-phosphate synthase family. Requires Mg(2+) as cofactor.

It carries out the reaction 2-[(2R,5Z)-2-carboxy-4-methylthiazol-5(2H)-ylidene]ethyl phosphate + 4-amino-2-methyl-5-(diphosphooxymethyl)pyrimidine + 2 H(+) = thiamine phosphate + CO2 + diphosphate. The enzyme catalyses 2-(2-carboxy-4-methylthiazol-5-yl)ethyl phosphate + 4-amino-2-methyl-5-(diphosphooxymethyl)pyrimidine + 2 H(+) = thiamine phosphate + CO2 + diphosphate. It catalyses the reaction 4-methyl-5-(2-phosphooxyethyl)-thiazole + 4-amino-2-methyl-5-(diphosphooxymethyl)pyrimidine + H(+) = thiamine phosphate + diphosphate. It participates in cofactor biosynthesis; thiamine diphosphate biosynthesis; thiamine phosphate from 4-amino-2-methyl-5-diphosphomethylpyrimidine and 4-methyl-5-(2-phosphoethyl)-thiazole: step 1/1. Functionally, condenses 4-methyl-5-(beta-hydroxyethyl)thiazole monophosphate (THZ-P) and 2-methyl-4-amino-5-hydroxymethyl pyrimidine pyrophosphate (HMP-PP) to form thiamine monophosphate (TMP). The protein is Thiamine-phosphate synthase of Pectobacterium atrosepticum (strain SCRI 1043 / ATCC BAA-672) (Erwinia carotovora subsp. atroseptica).